Reading from the N-terminus, the 1534-residue chain is Dicer-like protein 2 (1534 aa).

Residues 1–10 are compositionally biased toward basic and acidic residues; it reads MDQDPRKDNP. The interval 1–36 is disordered; the sequence is MDQDPRKDNPVEMDVDRDDSSQDPDDNESFKSALDE. Residues 11–27 are compositionally biased toward acidic residues; sequence VEMDVDRDDSSQDPDDN. Positions 65–249 constitute a Helicase ATP-binding domain; the sequence is TPAALTARAY…IEKLEQVLDA (185 aa). 78 to 85 is a binding site for ATP; that stretch reads MFEASLKQ. A DEAH box motif is present at residues 192 to 195; sequence DEAH. In terms of domain architecture, Helicase C-terminal spans 404–575; it reads KVQTLLKVLA…NAELELLDDP (172 aa). In terms of domain architecture, Dicer dsRNA-binding fold spans 597–700; the sequence is ARSHLNHFCA…LPTKVSDFLA (104 aa). RNase III domains are found at residues 959–1107 and 1153–1353; these read MSLV…MCGG and LEPL…VDSG. Positions 1193, 1339, and 1342 each coordinate Mg(2+). The region spanning 1383–1483 is the DRBM domain; that stretch reads HPNVELQILA…AEKGCLVIKA (101 aa). Residues 1492–1504 show a composition bias toward basic and acidic residues; it reads KAAAKEDKGHNTE. Residues 1492 to 1534 are disordered; that stretch reads KAAAKEDKGHNTENGDANADNGQSGEKEEVPDCRDADGDTVMN. The segment covering 1505–1515 has biased composition (polar residues); it reads NGDANADNGQS. Over residues 1516 to 1528 the composition is skewed to basic and acidic residues; it reads GEKEEVPDCRDAD.

The protein belongs to the helicase family. Dicer subfamily. Requires Mg(2+) as cofactor. It depends on Mn(2+) as a cofactor.

Functionally, dicer-like endonuclease involved in cleaving double-stranded RNA in the RNA interference (RNAi) pathway. Produces 21 to 25 bp dsRNAs (siRNAs) which target the selective destruction of homologous RNAs leading to sequence-specific suppression of gene expression, called post-transcriptional gene silencing (PTGS). Part of a broad host defense response against viral infection and transposons. Controls the expression of the non-LTR retrotransposon Tad in the African strain, Adiomopoume. This is Dicer-like protein 2 (dcl-2) from Neurospora crassa (strain ATCC 24698 / 74-OR23-1A / CBS 708.71 / DSM 1257 / FGSC 987).